We begin with the raw amino-acid sequence, 418 residues long: MVDHKRIPKQVIVGVSGGIAAYKACTVVRQLTEASHRVRVIPTESALRFVGAATFEALSGEPVCTDVFADVPAVPHVHLGQQADLVVVAPATADLLARAAAGRADDLLTATLLTARCPVLFAPAMHTEMWLHPATVDNVATLRRRGAVVLEPATGRLTGADSGAGRLPEAEEITTLAQLLLERHDALPYDLAGRKLLVTAGGTREPIDPVRFIGNRSSGKQGYAVARVAAQRGADVTLIAGHTAGLVDPAGVEVVHVSSAQQLADAVSKHAPTADVLVMAAAVADFRPAQVATAKIKKGVEGPPTIELLRNDDVLAGVVRARAHGQLPNMRAIVGFAAETGDANGDVLFHARAKLRRKGCDLLVVNAVGEGRAFEVDSNDGWLLASDGTESALQHGSKTLMASRIVDAIVTFLAGCSS.

The interval 1 to 195 (MVDHKRIPKQ…ALPYDLAGRK (195 aa)) is phosphopantothenoylcysteine decarboxylase. The phosphopantothenate--cysteine ligase stretch occupies residues 196-418 (LLVTAGGTRE…IVTFLAGCSS (223 aa)). Residues Asp285, Lys295, Phe336, Lys354, and Lys358 each coordinate CTP.

In the N-terminal section; belongs to the HFCD (homo-oligomeric flavin containing Cys decarboxylase) superfamily. It in the C-terminal section; belongs to the PPC synthetase family. Mg(2+) is required as a cofactor. FMN serves as cofactor.

It carries out the reaction N-[(R)-4-phosphopantothenoyl]-L-cysteine + H(+) = (R)-4'-phosphopantetheine + CO2. The catalysed reaction is (R)-4'-phosphopantothenate + L-cysteine + CTP = N-[(R)-4-phosphopantothenoyl]-L-cysteine + CMP + diphosphate + H(+). The protein operates within cofactor biosynthesis; coenzyme A biosynthesis; CoA from (R)-pantothenate: step 2/5. It participates in cofactor biosynthesis; coenzyme A biosynthesis; CoA from (R)-pantothenate: step 3/5. Functionally, catalyzes two sequential steps in the biosynthesis of coenzyme A. In the first step cysteine is conjugated to 4'-phosphopantothenate to form 4-phosphopantothenoylcysteine. In the second step the latter compound is decarboxylated to form 4'-phosphopantotheine. The protein is Coenzyme A biosynthesis bifunctional protein CoaBC of Mycobacterium bovis (strain ATCC BAA-935 / AF2122/97).